A 469-amino-acid polypeptide reads, in one-letter code: Glutamine synthetase (469 aa).

Residues 13-97 (HEVKFVDLRF…IRCDILEPGT (85 aa)) enclose the GS beta-grasp domain. The 365-residue stretch at 105–469 (PRSIAKRAED…PVEFELYYSV (365 aa)) folds into the GS catalytic domain. Residues Glu-130 and Glu-132 each coordinate Mg(2+). ATP is bound at residue Glu-208. Mg(2+)-binding residues include Glu-213 and Glu-221. L-glutamate is bound by residues 265–266 (NG) and Gly-266. His-270 is a Mg(2+) binding site. Residues 272–274 (HMS) and Ser-274 each bind ATP. Arg-322, Glu-328, and Arg-340 together coordinate L-glutamate. ATP contacts are provided by Arg-340, Arg-345, and Lys-353. Glu-358 lines the Mg(2+) pocket. Arg-360 contacts L-glutamate. An O-AMP-tyrosine modification is found at Tyr-398.

Belongs to the glutamine synthetase family. In terms of assembly, oligomer of 12 subunits arranged in the form of two hexagons. The cofactor is Mn(2+).

The protein resides in the cytoplasm. It catalyses the reaction L-glutamate + NH4(+) + ATP = L-glutamine + ADP + phosphate + H(+). When cellular nitrogen levels are high, the C-terminal adenylyl transferase (AT) of GlnE inhibits GlnA by covalent transfer of an adenylyl group from ATP to Tyr-398. Conversely, when nitrogen levels are low, the N-terminal adenylyl removase (AR) of GlnE activates GlnA by removing the adenylyl group by phosphorolysis. The fully adenylated enzyme complex is inactive. In terms of biological role, catalyzes the ATP-dependent biosynthesis of glutamine from glutamate and ammonia. The sequence is that of Glutamine synthetase from Salmonella typhi.